Consider the following 242-residue polypeptide: Hairy and enhancer of split-related protein HELT (242 aa).

The bHLH domain maps to 10 to 65; the sequence is RTPVSHKVIEKRRRDRINRCLNELGKTVPMALAKQSSGKLEKAEILEMTVQYLRAL. At Lys48 the chain carries N6-acetyllysine. One can recognise an Orange domain in the interval 87-122; it reads FHYGYHECMKNLVHYLTTVERMETKDTKYARILAFL.

The protein belongs to the HEY family. Self-associates. Interacts with HES5 and HEY2.

It is found in the nucleus. Transcriptional repressor which binds preferentially to the canonical E box sequence 5'-CACGCG-3'. In Homo sapiens (Human), this protein is Hairy and enhancer of split-related protein HELT (HELT).